A 169-amino-acid polypeptide reads, in one-letter code: GTP-dependent dephospho-CoA kinase (169 aa).

Residues aspartate 45, aspartate 64, and glutamate 121 each coordinate GTP.

This sequence belongs to the GTP-dependent DPCK family.

It catalyses the reaction 3'-dephospho-CoA + GTP = GDP + CoA + H(+). Its pathway is cofactor biosynthesis; coenzyme A biosynthesis. Its function is as follows. Catalyzes the GTP-dependent phosphorylation of the 3'-hydroxyl group of dephosphocoenzyme A to form coenzyme A (CoA). The chain is GTP-dependent dephospho-CoA kinase from Methanobrevibacter smithii (strain ATCC 35061 / DSM 861 / OCM 144 / PS).